We begin with the raw amino-acid sequence, 606 residues long: Pescadillo homolog (606 aa).

The 102-residue stretch at 346–447 folds into the BRCT domain; sequence LSTSLFSPYT…KILLEGPYGQ (102 aa). The tract at residues 461–497 is disordered; that stretch reads YEGAYDPAAGPLGPSGVEQESESEADEVSEEDEEDQG. Acidic residues predominate over residues 479–496; it reads QESESEADEVSEEDEEDQ.

The protein belongs to the pescadillo family. Component of the NOP7 complex, composed of ERB1, NOP7 and YTM1. The complex is held together by ERB1, which interacts with NOP7 via its N-terminal domain and with YTM1 via a high-affinity interaction between the seven-bladed beta-propeller domains of the 2 proteins. The NOP7 complex associates with the 66S pre-ribosome.

The protein resides in the nucleus. The protein localises to the nucleolus. It localises to the nucleoplasm. In terms of biological role, component of the NOP7 complex, which is required for maturation of the 25S and 5.8S ribosomal RNAs and formation of the 60S ribosome. The polypeptide is Pescadillo homolog (Laccaria bicolor (strain S238N-H82 / ATCC MYA-4686) (Bicoloured deceiver)).